Consider the following 167-residue polypeptide: 6,7-dimethyl-8-ribityllumazine synthase (167 aa).

5-amino-6-(D-ribitylamino)uracil contacts are provided by residues Phe23, 57–59 (TYE), and 81–83 (AVI). Position 86 to 87 (86 to 87 (GT)) interacts with (2S)-2-hydroxy-3-oxobutyl phosphate. His89 functions as the Proton donor in the catalytic mechanism. Phe119 contacts 5-amino-6-(D-ribitylamino)uracil. Arg133 serves as a coordination point for (2S)-2-hydroxy-3-oxobutyl phosphate.

The protein belongs to the DMRL synthase family.

It carries out the reaction (2S)-2-hydroxy-3-oxobutyl phosphate + 5-amino-6-(D-ribitylamino)uracil = 6,7-dimethyl-8-(1-D-ribityl)lumazine + phosphate + 2 H2O + H(+). The protein operates within cofactor biosynthesis; riboflavin biosynthesis; riboflavin from 2-hydroxy-3-oxobutyl phosphate and 5-amino-6-(D-ribitylamino)uracil: step 1/2. Catalyzes the formation of 6,7-dimethyl-8-ribityllumazine by condensation of 5-amino-6-(D-ribitylamino)uracil with 3,4-dihydroxy-2-butanone 4-phosphate. This is the penultimate step in the biosynthesis of riboflavin. The polypeptide is 6,7-dimethyl-8-ribityllumazine synthase (Myxococcus xanthus (strain DK1622)).